The chain runs to 378 residues: MKVLAAMSGGVDSAVAAARTVEAGHEVVGVHLALSRMPGTLRTGSRGCCTIEDSTDAWKACEKLGIPYYVWDFSERFKEDVVDDFIAEYAAGRTPNPCMRCNERIKFAALLEKAIALGFDAVCTGHYARVAQDEDGNYELHRASDWAKDQSYVLGVLTHEQLKHSMFPLSDAQTKAEVRAEADRRGLSVAKKPDSHDICFISDGDTRGWLAEKIDMTPGEILDQSGAKVGTHEGANAFTVGQRRGLKLGTPAADGKPRFVLEIRPKENTVVVGPEQMLAMNEIRGIKISWAGEPIAEVGAGTEFDCMAQVRAHGDPVPARAFVTTDDDGAPLLVVNLIDPLRGVAPGQTVVLYQGTRVLGQATIDTARSLVSSSTKVD.

Residues 6 to 13 (AMSGGVDS) and Leu32 contribute to the ATP site. The active-site Nucleophile is the Cys101. Residues Cys101 and Cys199 are joined by a disulfide bond. Gly125 is a binding site for ATP. The interval 148-150 (KDQ) is interaction with tRNA. Catalysis depends on Cys199, which acts as the Cysteine persulfide intermediate.

Belongs to the MnmA/TRMU family.

The protein resides in the cytoplasm. It catalyses the reaction S-sulfanyl-L-cysteinyl-[protein] + uridine(34) in tRNA + AH2 + ATP = 2-thiouridine(34) in tRNA + L-cysteinyl-[protein] + A + AMP + diphosphate + H(+). Its function is as follows. Catalyzes the 2-thiolation of uridine at the wobble position (U34) of tRNA, leading to the formation of s(2)U34. This is tRNA-specific 2-thiouridylase MnmA from Renibacterium salmoninarum (strain ATCC 33209 / DSM 20767 / JCM 11484 / NBRC 15589 / NCIMB 2235).